The chain runs to 444 residues: D(2) dopamine receptor (444 aa).

The Extracellular segment spans residues Met1–Tyr37. Residues Asn5, Asn17, and Asn23 are each glycosylated (N-linked (GlcNAc...) asparagine). A helical membrane pass occupies residues Ala38–Ser60. Topologically, residues Arg61–Asn70 are cytoplasmic. A helical membrane pass occupies residues Tyr71–Tyr93. The Extracellular portion of the chain corresponds to Leu94–Asp108. Cys107 and Cys182 are oxidised to a cystine. A helical transmembrane segment spans residues Ile109–Ile130. The Cytoplasmic segment spans residues Asp131–Arg151. Residues Val152–Phe172 form a helical membrane-spanning segment. Topologically, residues Gly173–Ala188 are extracellular. A helical transmembrane segment spans residues Phe189–Tyr213. The segment at Lys211 to Gln374 is interaction with PPP1R9B. At Ile214–Gln374 the chain is on the cytoplasmic side. The tract at residues Glu282–Gly329 is disordered. Residues Met375–Leu396 form a helical membrane-spanning segment. Residues Asn397–Ser410 lie on the Extracellular side of the membrane. An intrachain disulfide couples Cys400 to Cys402. Residues Ala411–Ile432 form a helical membrane-spanning segment. The Cytoplasmic portion of the chain corresponds to Glu433–Cys444. Cys444 is lipidated: S-palmitoyl cysteine.

Belongs to the G-protein coupled receptor 1 family. As to quaternary structure, forms homo- and heterooligomers with DRD4. The interaction with DRD4 may modulate agonist-induced downstream signaling. Interacts with CADPS and CADPS2. Interacts with GPRASP1, PPP1R9B and CLIC6. Interacts with ARRB2. Interacts with HTR2A. Interacts with DRD1. Interacts with KCNA2. Palmitoylated. Palmitoylation which is required for proper localization to the plasma membrane and stability of the receptor could be carried on by ZDHHC4, ZDHHC3 and ZDHHC8. In terms of tissue distribution, expressed in retinal hyaloid vessels at postnatal day 6. As to expression, expressed in the pituitary gland, stratum, brain stem and cortex. Expressed in the brain stem.

The protein resides in the cell membrane. It is found in the golgi apparatus membrane. Dopamine receptor whose activity is mediated by G proteins which inhibit adenylyl cyclase. Positively regulates postnatal regression of retinal hyaloid vessels via suppression of VEGFR2/KDR activity, downstream of OPN5. This Mus musculus (Mouse) protein is D(2) dopamine receptor (Drd2).